A 361-amino-acid polypeptide reads, in one-letter code: Peptide chain release factor 1 (361 aa).

An N5-methylglutamine modification is found at Q237.

Belongs to the prokaryotic/mitochondrial release factor family. In terms of processing, methylated by PrmC. Methylation increases the termination efficiency of RF1.

It localises to the cytoplasm. In terms of biological role, peptide chain release factor 1 directs the termination of translation in response to the peptide chain termination codons UAG and UAA. This Thioalkalivibrio sulfidiphilus (strain HL-EbGR7) protein is Peptide chain release factor 1.